Here is an 87-residue protein sequence, read N- to C-terminus: Small ribosomal subunit protein bS20 (87 aa).

The interval 1–26 is disordered; it reads MANIKSAKKRAVQSEKARKHNASRRS.

Belongs to the bacterial ribosomal protein bS20 family.

In terms of biological role, binds directly to 16S ribosomal RNA. This Klebsiella pneumoniae (strain 342) protein is Small ribosomal subunit protein bS20.